A 694-amino-acid chain; its full sequence is Putative ankyrin repeat protein RBE_0921 (694 aa).

ANK repeat units follow at residues 122–151 (LGKT…NINV), 155–185 (NGRN…NINS), 216–245 (FNRT…NVEA), 249–275 (TGET…NTEA), 279–317 (LGRT…NPNA), 321–350 (YGFT…KFKK), 351–382 (NRYE…NIND), 384–413 (NGQN…DNGK), 423–452 (QRNT…DINA), and 456–485 (DGET…DINI).

This is Putative ankyrin repeat protein RBE_0921 from Rickettsia bellii (strain RML369-C).